We begin with the raw amino-acid sequence, 172 residues long: Exocyst complex component 1-like (172 aa).

The chain is Exocyst complex component 1-like from Mus musculus (Mouse).